Here is a 260-residue protein sequence, read N- to C-terminus: 3'-5' ssDNA/RNA exonuclease TatD (260 aa).

E92, H128, and H153 together coordinate a divalent metal cation.

Belongs to the metallo-dependent hydrolases superfamily. TatD-type hydrolase family. TatD subfamily. As to quaternary structure, monomer. Requires Mg(2+) as cofactor.

It is found in the cytoplasm. 3'-5' exonuclease that prefers single-stranded DNA and RNA. May play a role in the H(2)O(2)-induced DNA damage repair. This chain is 3'-5' ssDNA/RNA exonuclease TatD, found in Pantoea ananatis (strain LMG 20103).